The primary structure comprises 180 residues: MIIYLHGFDSNSPGNHEKVLQLQFIDPDVRLISYSTRHPKHDMQHLLKEVDKMLQLNVDERPLICGVGLGGYWAERIGFLCDIRQVIFNPNLFPYENMEGKIDRPEEYADIATKCVTNFREKNRDRCLVILSRNDEALNSQRTSEELHHYYEIVWDEEQTHKFKNISPHLQRIKAFKTLG.

It belongs to the UPF0227 family.

The sequence is that of UPF0227 protein YcfP from Escherichia coli O139:H28 (strain E24377A / ETEC).